A 492-amino-acid chain; its full sequence is Probable malate:quinone oxidoreductase 1 (492 aa).

Belongs to the MQO family. FAD serves as cofactor.

It carries out the reaction (S)-malate + a quinone = a quinol + oxaloacetate. It functions in the pathway carbohydrate metabolism; tricarboxylic acid cycle; oxaloacetate from (S)-malate (quinone route): step 1/1. The chain is Probable malate:quinone oxidoreductase 1 from Staphylococcus aureus (strain MW2).